The chain runs to 380 residues: Succinyl-diaminopimelate desuccinylase (380 aa).

His-70 contacts Zn(2+). The active site involves Asp-72. Asp-103 provides a ligand contact to Zn(2+). The active-site Proton acceptor is the Glu-137. The Zn(2+) site is built by Glu-138, Glu-166, and His-352.

It belongs to the peptidase M20A family. DapE subfamily. In terms of assembly, homodimer. The cofactor is Zn(2+). Co(2+) is required as a cofactor.

It catalyses the reaction N-succinyl-(2S,6S)-2,6-diaminopimelate + H2O = (2S,6S)-2,6-diaminopimelate + succinate. It participates in amino-acid biosynthesis; L-lysine biosynthesis via DAP pathway; LL-2,6-diaminopimelate from (S)-tetrahydrodipicolinate (succinylase route): step 3/3. Its function is as follows. Catalyzes the hydrolysis of N-succinyl-L,L-diaminopimelic acid (SDAP), forming succinate and LL-2,6-diaminopimelate (DAP), an intermediate involved in the bacterial biosynthesis of lysine and meso-diaminopimelic acid, an essential component of bacterial cell walls. In Azoarcus sp. (strain BH72), this protein is Succinyl-diaminopimelate desuccinylase.